We begin with the raw amino-acid sequence, 304 residues long: Sulfate adenylyltransferase subunit 2 (304 aa).

The protein belongs to the PAPS reductase family. CysD subfamily. In terms of assembly, heterodimer composed of CysD, the smaller subunit, and CysN.

It carries out the reaction sulfate + ATP + H(+) = adenosine 5'-phosphosulfate + diphosphate. The protein operates within sulfur metabolism; hydrogen sulfide biosynthesis; sulfite from sulfate: step 1/3. Functionally, with CysN forms the ATP sulfurylase (ATPS) that catalyzes the adenylation of sulfate producing adenosine 5'-phosphosulfate (APS) and diphosphate, the first enzymatic step in sulfur assimilation pathway. APS synthesis involves the formation of a high-energy phosphoric-sulfuric acid anhydride bond driven by GTP hydrolysis by CysN coupled to ATP hydrolysis by CysD. The chain is Sulfate adenylyltransferase subunit 2 from Acinetobacter baylyi (strain ATCC 33305 / BD413 / ADP1).